The chain runs to 574 residues: Amino-acid acetyltransferase, mitochondrial (574 aa).

The transit peptide at 1-13 (MWRRIFAHGLKYD) directs the protein to the mitochondrion. The N-acetyltransferase domain occupies 392–560 (KGAKPSNNSP…KRLREFMRSV (169 aa)).

Belongs to the acetyltransferase family. In terms of assembly, interacts with the acetylglutamate kinase chain of AGR5,6.

It is found in the mitochondrion. The catalysed reaction is L-glutamate + acetyl-CoA = N-acetyl-L-glutamate + CoA + H(+). It participates in amino-acid biosynthesis; L-arginine biosynthesis; N(2)-acetyl-L-ornithine from L-glutamate: step 1/4. With respect to regulation, feedback inhibition by L-arginine. Its function is as follows. N-acetylglutamate synthase involved in arginine biosynthesis. This Saccharomyces cerevisiae (strain YJM789) (Baker's yeast) protein is Amino-acid acetyltransferase, mitochondrial (ARG2).